The sequence spans 1701 residues: DDB1- and CUL4-associated factor homolog 1 (1701 aa).

Polar residues predominate over residues 224-245 (HAEQSTSNGTSIPSIKITSVDG). Disordered regions lie at residues 224–269 (HAEQ…RRTE), 883–906 (DRPA…GNNF), and 932–961 (RPSN…TPTL). Residues 851-883 (NQAELLQLIHDHLLKSKLDSVAAMLKSEAKLPD) form the LisH domain. Polar residues predominate over residues 888-906 (RSINTPILNKPLPSSGNNF). WD repeat units lie at residues 1086–1125 (DHDE…DEGH), 1128–1169 (CHGS…QRVH), 1171–1210 (YRED…DTYL), and 1215–1252 (GLQY…HVFD). 2 short sequence motifs (DWD box) span residues 1237-1245 (LLWDVRKKN) and 1275-1282 (EVYDIRTF). Disordered stretches follow at residues 1384-1559 (IGRL…DINL), 1566-1585 (EARV…PVDP), and 1641-1701 (LVRG…DDEA). Composition is skewed to acidic residues over residues 1390–1423 (NEDE…DEEI) and 1451–1461 (DDNDTLDDLDF). Basic residues predominate over residues 1468-1479 (IIRRQAQRRRQR). Acidic residues-rich tracts occupy residues 1494 to 1512 (EGSD…DPDF) and 1520 to 1543 (DLVD…DDDS). The segment covering 1567 to 1581 (ARVVENEGNNERPAR) has biased composition (basic and acidic residues). Residues 1667–1678 (DTDEYQSEEEEI) show a composition bias toward acidic residues.

The protein belongs to the VPRBP/DCAF1 family. In terms of assembly, component of the cul4-rbx1-ddb1-dcaf1 E3 ubiquitin-protein ligase complex.

It is found in the nucleus. The protein operates within protein modification; protein ubiquitination. Its function is as follows. Component of the cul4-rbx1-ddb1-dcaf1 E3 ubiquitin-protein ligase complex, dcaf1 may function as the substrate recognition module within this complex. In Caenorhabditis elegans, this protein is DDB1- and CUL4-associated factor homolog 1 (dcaf-1).